We begin with the raw amino-acid sequence, 517 residues long: Bifunctional purine biosynthesis protein PurH (517 aa).

The 145-residue stretch at 1 to 145 (MSPLALVSVS…KNHKDVSVLV (145 aa)) folds into the MGS-like domain.

It belongs to the PurH family.

The enzyme catalyses (6R)-10-formyltetrahydrofolate + 5-amino-1-(5-phospho-beta-D-ribosyl)imidazole-4-carboxamide = 5-formamido-1-(5-phospho-D-ribosyl)imidazole-4-carboxamide + (6S)-5,6,7,8-tetrahydrofolate. It catalyses the reaction IMP + H2O = 5-formamido-1-(5-phospho-D-ribosyl)imidazole-4-carboxamide. Its pathway is purine metabolism; IMP biosynthesis via de novo pathway; 5-formamido-1-(5-phospho-D-ribosyl)imidazole-4-carboxamide from 5-amino-1-(5-phospho-D-ribosyl)imidazole-4-carboxamide (10-formyl THF route): step 1/1. The protein operates within purine metabolism; IMP biosynthesis via de novo pathway; IMP from 5-formamido-1-(5-phospho-D-ribosyl)imidazole-4-carboxamide: step 1/1. The protein is Bifunctional purine biosynthesis protein PurH of Prochlorococcus marinus (strain MIT 9301).